Here is a 426-residue protein sequence, read N- to C-terminus: Histidine--tRNA ligase (426 aa).

It belongs to the class-II aminoacyl-tRNA synthetase family. In terms of assembly, homodimer.

It localises to the cytoplasm. The catalysed reaction is tRNA(His) + L-histidine + ATP = L-histidyl-tRNA(His) + AMP + diphosphate + H(+). This chain is Histidine--tRNA ligase, found in Streptococcus pyogenes serotype M5 (strain Manfredo).